The chain runs to 295 residues: Pyridoxal 5'-phosphate synthase subunit PdxS (295 aa).

Residue aspartate 25 participates in D-ribose 5-phosphate binding. Lysine 82 acts as the Schiff-base intermediate with D-ribose 5-phosphate in catalysis. Glycine 154 contributes to the D-ribose 5-phosphate binding site. Arginine 166 provides a ligand contact to D-glyceraldehyde 3-phosphate. D-ribose 5-phosphate-binding positions include glycine 215 and 236-237; that span reads GS.

This sequence belongs to the PdxS/SNZ family. In the presence of PdxT, forms a dodecamer of heterodimers.

It carries out the reaction aldehydo-D-ribose 5-phosphate + D-glyceraldehyde 3-phosphate + L-glutamine = pyridoxal 5'-phosphate + L-glutamate + phosphate + 3 H2O + H(+). The protein operates within cofactor biosynthesis; pyridoxal 5'-phosphate biosynthesis. In terms of biological role, catalyzes the formation of pyridoxal 5'-phosphate from ribose 5-phosphate (RBP), glyceraldehyde 3-phosphate (G3P) and ammonia. The ammonia is provided by the PdxT subunit. Can also use ribulose 5-phosphate and dihydroxyacetone phosphate as substrates, resulting from enzyme-catalyzed isomerization of RBP and G3P, respectively. This chain is Pyridoxal 5'-phosphate synthase subunit PdxS, found in Shouchella clausii (strain KSM-K16) (Alkalihalobacillus clausii).